The primary structure comprises 118 residues: Aspartate 1-decarboxylase (118 aa).

Ser25 functions as the Schiff-base intermediate with substrate; via pyruvic acid in the catalytic mechanism. Pyruvic acid (Ser) is present on Ser25. Position 57 (Thr57) interacts with substrate. The Proton donor role is filled by Tyr58. Residue 73–75 (GAA) coordinates substrate.

It belongs to the PanD family. Heterooctamer of four alpha and four beta subunits. It depends on pyruvate as a cofactor. In terms of processing, is synthesized initially as an inactive proenzyme, which is activated by self-cleavage at a specific serine bond to produce a beta-subunit with a hydroxyl group at its C-terminus and an alpha-subunit with a pyruvoyl group at its N-terminus.

It is found in the cytoplasm. It catalyses the reaction L-aspartate + H(+) = beta-alanine + CO2. It participates in cofactor biosynthesis; (R)-pantothenate biosynthesis; beta-alanine from L-aspartate: step 1/1. Catalyzes the pyruvoyl-dependent decarboxylation of aspartate to produce beta-alanine. The protein is Aspartate 1-decarboxylase of Syntrophomonas wolfei subsp. wolfei (strain DSM 2245B / Goettingen).